Reading from the N-terminus, the 144-residue chain is Large ribosomal subunit protein uL16 (144 aa).

The protein belongs to the universal ribosomal protein uL16 family. Part of the 50S ribosomal subunit.

Binds 23S rRNA and is also seen to make contacts with the A and possibly P site tRNAs. The chain is Large ribosomal subunit protein uL16 from Clostridium botulinum (strain Alaska E43 / Type E3).